The sequence spans 476 residues: MDDLRDTLMAYGCIAIRAGDFNGLNDFLEQECGTRLHVAWPERCFIQLRSRSALGPFVGKMGTVCSQGAYVCCQEYLHPFGFVEGPGFMRYQLIVLIGQRGGIYCYDDLRDCVYELAPTMKDFLRNGFRHRDHFHTMRDYQRPMVQYDDYWNAVMLYRGDVESLSAEVTKRGYASYTIDDPFDECPDTHFAFWTHNTEVMKFKETSFSVVRAGGSIQTMELMIRTVPRITCYHQLLGALGHEVPERKEFLVRQYVLVDTFGVVYGYDPAMDAVYRLAEDVVMFTCVMGKKGHRNHRFSGRREAIVRLEKTPTCQHPKKTPDPMIMFDEDDDDELSLPRNVMTHEEAESRLYDAITENLMHCVKLVTTDSPLATHLWPQELQALCDSPALSLCTDDVEGVRQKLRARTGSLHHFELSYRFHDEDPETYMGFLWDIPSCDRCVRRRRFKVCDVGRRHIIPGAANGMPPLTPPHVYMNN.

It belongs to the herpesviridae US22 family.

This is an uncharacterized protein from Homo sapiens (Human).